The sequence spans 438 residues: UDP-N-acetylmuramoylalanine--D-glutamate ligase (438 aa).

Residue 115–121 (GSNGKST) participates in ATP binding.

This sequence belongs to the MurCDEF family.

It localises to the cytoplasm. It catalyses the reaction UDP-N-acetyl-alpha-D-muramoyl-L-alanine + D-glutamate + ATP = UDP-N-acetyl-alpha-D-muramoyl-L-alanyl-D-glutamate + ADP + phosphate + H(+). It participates in cell wall biogenesis; peptidoglycan biosynthesis. Its function is as follows. Cell wall formation. Catalyzes the addition of glutamate to the nucleotide precursor UDP-N-acetylmuramoyl-L-alanine (UMA). The protein is UDP-N-acetylmuramoylalanine--D-glutamate ligase of Vibrio atlanticus (strain LGP32) (Vibrio splendidus (strain Mel32)).